Here is a 284-residue protein sequence, read N- to C-terminus: Avenin-like b4 (284 aa).

A signal peptide spans 1–18 (MKVFILALLALTATTAIA).

This sequence belongs to the prolamin family. Contains disulfide bonds.

In terms of biological role, seed storage protein. Might be integrated via inter-chain disulfide bonds within the glutenin polymer. This chain is Avenin-like b4, found in Triticum aestivum (Wheat).